A 593-amino-acid chain; its full sequence is Serine/threonine-protein kinase PAK 4 (593 aa).

One can recognise a CRIB domain in the interval Ile-11–Gly-24. The tract at residues Phe-25 to Tyr-322 is linker. Position 41 is a phosphoserine (Ser-41). Residue Lys-78 is modified to N6-methyllysine. The segment at Thr-95 to His-303 is disordered. Ser-104 carries the post-translational modification Phosphoserine. Residues Leu-118–Gly-133 are compositionally biased toward basic and acidic residues. The residue at position 148 (Ser-148) is a Phosphoserine. Over residues Gly-149 to Arg-164 the composition is skewed to basic and acidic residues. Ser-181 bears the Phosphoserine mark. Residues Asp-184–Thr-197 are compositionally biased toward polar residues. Thr-187 is subject to Phosphothreonine. At Ser-195 the chain carries Phosphoserine. Position 207 is a phosphothreonine (Thr-207). Positions Ala-238–Pro-258 are enriched in low complexity. Ser-257 and Ser-266 each carry phosphoserine. Residues Glu-267 to Pro-280 show a composition bias toward low complexity. A compositionally biased stretch (pro residues) spans Ala-281–Arg-292. The residue at position 293 (Ser-293) is a Phosphoserine. Residues Pro-294–His-303 show a composition bias toward basic and acidic residues. A Protein kinase domain is found at Leu-323 to Leu-574. ATP-binding positions include Ile-329–Val-337 and Lys-352. The active-site Proton acceptor is Asp-442. Phosphoserine; by autocatalysis is present on Ser-476.

This sequence belongs to the protein kinase superfamily. STE Ser/Thr protein kinase family. STE20 subfamily. As to quaternary structure, interacts tightly with GTP-bound but not GDP-bound CDC42/p21 and weakly with RAC1. Interacts with FGFR2 and GRB2. Interacts with INKA1. Interacts with SH3RF2. Interacts with RHOU and PAXI; the PAK4-RHOU complex protects RHOU from ubiquitination and acts as a scaffold to suppport paxillin/PAXI phosphorylation. Post-translationally, autophosphorylated on serine residues when activated by CDC42/p21. Phosphorylated on tyrosine residues upon stimulation of FGFR2. Methylated by SETD6. Polyubiquitinated, leading to its proteasomal degradation.

The protein localises to the cytoplasm. The enzyme catalyses L-seryl-[protein] + ATP = O-phospho-L-seryl-[protein] + ADP + H(+). It catalyses the reaction L-threonyl-[protein] + ATP = O-phospho-L-threonyl-[protein] + ADP + H(+). With respect to regulation, inhibited by INKA1; which inhibits the serine/threonine-protein kinase activity by binding PAK4 in a substrate-like manner. In terms of biological role, serine/threonine protein kinase that plays a role in a variety of different signaling pathways including cytoskeleton regulation, cell migration, growth, proliferation or cell survival. Activation by various effectors including growth factor receptors or active CDC42 and RAC1 results in a conformational change and a subsequent autophosphorylation on several serine and/or threonine residues. Phosphorylates and inactivates the protein phosphatase SSH1, leading to increased inhibitory phosphorylation of the actin binding/depolymerizing factor cofilin. Decreased cofilin activity may lead to stabilization of actin filaments. Phosphorylates LIMK1, a kinase that also inhibits the activity of cofilin. Phosphorylates integrin beta5/ITGB5 and thus regulates cell motility. Phosphorylates ARHGEF2 and activates the downstream target RHOA that plays a role in the regulation of assembly of focal adhesions and actin stress fibers. Stimulates cell survival by phosphorylating the BCL2 antagonist of cell death BAD. Alternatively, inhibits apoptosis by preventing caspase-8 binding to death domain receptors in a kinase independent manner. Plays a role in cell-cycle progression by controlling levels of the cell-cycle regulatory protein CDKN1A and by phosphorylating RAN. Promotes kinase-independent stabilization of RHOU, thereby contributing to focal adhesion disassembly during cell migration. This chain is Serine/threonine-protein kinase PAK 4, found in Mus musculus (Mouse).